The chain runs to 111 residues: MKLWLWVAVGVWMLMAELGTIETAPRRDGTRPSVSGARPQQVVNRLFFDYPDSDRASLLAVARFIGEKPITFVKTDSSPGLFQNILVGTLVVAFFFLLFQFCLHVNFQKGA.

The signal sequence occupies residues 1–23 (MKLWLWVAVGVWMLMAELGTIET). A helical membrane pass occupies residues 85–105 (ILVGTLVVAFFFLLFQFCLHV).

As to expression, testis-specific.

Its subcellular location is the cell membrane. It localises to the secreted. Its function is as follows. Plays a role in sperm-oocyte fusion process during fertilization. This chain is Fertilization-influencing membrane protein, found in Mus musculus (Mouse).